The chain runs to 396 residues: Probable protein phosphatase 2C 25 (396 aa).

Residues Glu32–Lys98 are disordered. The segment covering Gln44–Pro61 has biased composition (low complexity). The PPM-type phosphatase domain maps to Gly139–Leu392. Residues Asp175, Gly176, Asp338, and Asp383 each contribute to the Mn(2+) site.

This sequence belongs to the PP2C family. In terms of assembly, interacts with MPK4 and MPK6. Mg(2+) is required as a cofactor. Requires Mn(2+) as cofactor.

It localises to the cytoplasm. It is found in the nucleus. The catalysed reaction is O-phospho-L-seryl-[protein] + H2O = L-seryl-[protein] + phosphate. The enzyme catalyses O-phospho-L-threonyl-[protein] + H2O = L-threonyl-[protein] + phosphate. Protein phosphatase that negatively regulates defense respones. Inactivates MPK4 and MPK6 MAP kinases involved in stress and defense signaling. This Arabidopsis thaliana (Mouse-ear cress) protein is Probable protein phosphatase 2C 25.